The following is a 475-amino-acid chain: Trifunctional enzyme subunit beta, mitochondrial (475 aa).

Residues 1–34 (MTTILTCPFKKLPTTSKWALRFAIRPLSCSSQLR) constitute a mitochondrion transit peptide. At lysine 73 the chain carries N6-acetyllysine; alternate. Lysine 73 carries the post-translational modification N6-succinyllysine; alternate. Cysteine 139 serves as the catalytic Acyl-thioester intermediate. The stretch at 174 to 221 (IRHSRKMRKLMLDLNKAKSMGQRLSLISKFRLNFLAPELPAVAEFSTS) is an intramembrane region. Position 189 is an N6-acetyllysine; alternate (lysine 189). Lysine 189 carries the post-translational modification N6-succinyllysine; alternate. N6-succinyllysine occurs at positions 191, 273, and 292. The residue at position 294 (lysine 294) is an N6-acetyllysine; alternate. Residue lysine 294 is modified to N6-succinyllysine; alternate. Lysine 299 bears the N6-acetyllysine mark. Lysine 333 is modified (N6-acetyllysine; alternate). Lysine 333 carries the N6-succinyllysine; alternate modification. N6-acetyllysine is present on residues lysine 349 and lysine 362. The active-site Proton donor/acceptor is the cysteine 459.

It belongs to the thiolase-like superfamily. Thiolase family. Heterotetramer of 2 alpha/HADHA and 2 beta/HADHB subunits; forms the mitochondrial trifunctional enzyme. Also purified as higher order heterooligomers including a 4 alpha/HADHA and 4 beta/HADHB heterooligomer which physiological significance remains unclear. The mitochondrial trifunctional enzyme interacts with MTLN. Interacts with RSAD2/viperin.

It localises to the mitochondrion. Its subcellular location is the mitochondrion inner membrane. It is found in the mitochondrion outer membrane. The protein localises to the endoplasmic reticulum. It catalyses the reaction an acyl-CoA + acetyl-CoA = a 3-oxoacyl-CoA + CoA. The enzyme catalyses butanoyl-CoA + acetyl-CoA = 3-oxohexanoyl-CoA + CoA. It carries out the reaction hexanoyl-CoA + acetyl-CoA = 3-oxooctanoyl-CoA + CoA. The catalysed reaction is octanoyl-CoA + acetyl-CoA = 3-oxodecanoyl-CoA + CoA. It catalyses the reaction decanoyl-CoA + acetyl-CoA = 3-oxododecanoyl-CoA + CoA. The enzyme catalyses dodecanoyl-CoA + acetyl-CoA = 3-oxotetradecanoyl-CoA + CoA. It carries out the reaction tetradecanoyl-CoA + acetyl-CoA = 3-oxohexadecanoyl-CoA + CoA. Its pathway is lipid metabolism; fatty acid beta-oxidation. In terms of biological role, mitochondrial trifunctional enzyme catalyzes the last three of the four reactions of the mitochondrial beta-oxidation pathway. The mitochondrial beta-oxidation pathway is the major energy-producing process in tissues and is performed through four consecutive reactions breaking down fatty acids into acetyl-CoA. Among the enzymes involved in this pathway, the trifunctional enzyme exhibits specificity for long-chain fatty acids. Mitochondrial trifunctional enzyme is a heterotetrameric complex composed of two proteins, the trifunctional enzyme subunit alpha/HADHA carries the 2,3-enoyl-CoA hydratase and the 3-hydroxyacyl-CoA dehydrogenase activities, while the trifunctional enzyme subunit beta/HADHB described here bears the 3-ketoacyl-CoA thiolase activity. In Macaca fascicularis (Crab-eating macaque), this protein is Trifunctional enzyme subunit beta, mitochondrial (HADHB).